Reading from the N-terminus, the 350-residue chain is Methionine aminopeptidase 1D, chloroplastic/mitochondrial (350 aa).

Residues 1 to 49 (MAGVKSLQPRLISSFLGNNSIRSTQPLIHLFRFDLGRRHVSMQLSRTFS) constitute a chloroplast and mitochondrion transit peptide. G50 carries the N-acetylglycine modification. Positions 71–90 (RLRPGNVSPRRPVPGHITKP) are disordered. Position 180 (H180) interacts with substrate. Residues D197, D208, and H271 each coordinate a divalent metal cation. Substrate is bound at residue H278. 2 residues coordinate a divalent metal cation: E303 and E334.

This sequence belongs to the peptidase M24A family. Methionine aminopeptidase type 1 subfamily. It depends on Co(2+) as a cofactor. Zn(2+) is required as a cofactor. Mn(2+) serves as cofactor. The cofactor is Fe(2+). In terms of tissue distribution, ubiquitous. Preferentially expressed in green tissues.

It is found in the plastid. The protein localises to the chloroplast. The protein resides in the mitochondrion. It catalyses the reaction Release of N-terminal amino acids, preferentially methionine, from peptides and arylamides.. Functionally, removes the N-terminal methionine from nascent proteins. The N-terminal methionine is often cleaved when the second residue in the primary sequence is small and uncharged (Met-Ala-, Cys, Gly, Pro, Ser, Thr, or Val). In Arabidopsis thaliana (Mouse-ear cress), this protein is Methionine aminopeptidase 1D, chloroplastic/mitochondrial (MAP1D).